The chain runs to 264 residues: S-adenosylmethionine decarboxylase proenzyme (264 aa).

Residue serine 111 is the Schiff-base intermediate with substrate; via pyruvic acid of the active site. Position 111 is a pyruvic acid (Ser); by autocatalysis (serine 111). Histidine 116 serves as the catalytic Proton acceptor; for processing activity. Cysteine 139 functions as the Proton donor; for catalytic activity in the catalytic mechanism.

This sequence belongs to the prokaryotic AdoMetDC family. Type 2 subfamily. As to quaternary structure, heterooctamer of four alpha and four beta chains arranged as a tetramer of alpha/beta heterodimers. Pyruvate serves as cofactor. Post-translationally, is synthesized initially as an inactive proenzyme. Formation of the active enzyme involves a self-maturation process in which the active site pyruvoyl group is generated from an internal serine residue via an autocatalytic post-translational modification. Two non-identical subunits are generated from the proenzyme in this reaction, and the pyruvate is formed at the N-terminus of the alpha chain, which is derived from the carboxyl end of the proenzyme. The post-translation cleavage follows an unusual pathway, termed non-hydrolytic serinolysis, in which the side chain hydroxyl group of the serine supplies its oxygen atom to form the C-terminus of the beta chain, while the remainder of the serine residue undergoes an oxidative deamination to produce ammonia and the pyruvoyl group blocking the N-terminus of the alpha chain.

The enzyme catalyses S-adenosyl-L-methionine + H(+) = S-adenosyl 3-(methylsulfanyl)propylamine + CO2. It functions in the pathway amine and polyamine biosynthesis; S-adenosylmethioninamine biosynthesis; S-adenosylmethioninamine from S-adenosyl-L-methionine: step 1/1. Catalyzes the decarboxylation of S-adenosylmethionine to S-adenosylmethioninamine (dcAdoMet), the propylamine donor required for the synthesis of the polyamines spermine and spermidine from the diamine putrescine. The polypeptide is S-adenosylmethionine decarboxylase proenzyme (Geobacillus thermodenitrificans (strain NG80-2)).